Reading from the N-terminus, the 806-residue chain is MSQPELFHDLPLEEVIGDRFGRYSKYIIQDRALPDARDGLKPVQRRILYAMHTDGNTFDKNFRKAAKTVGNVIGNYHPHGDSSVYEAMVRMSQDWKVRNVLIEMHGNNGSIDGDPPAAMRYTEARLSPIASELLRDIDKNTVEFVPNFDDTSKEPVVLPAMFPNLLVNGSTGISAGYATDIPPHHLGEVIDAVIKRIQMPSCSVDELMEVIKGPDFPTGGIIQGVDGIRKAYETGKGKIIIRGKAEIETIRGGREQIVITEIPFEVNKANLVKKMDEFRIDKKVEGISEVRDETDRTGLRVVIELKKEADAKGILNFLYKNTDLQITYNFNMVAIHNRRPMLMSLPSILDAYIGHQKEVVTNRSVYELQKAKDRHHIVEGLMKALSILDEVIATIRSSSDKRDAKNNLIAKYEFTEPQAEAIVSLQLYRLTNTDITALKEEAEELGKKIEELESILSNDKKLLKVITNSLKALKKKYADTRRSVIEEKIEEIKINLEVMVASEDVYVTVTKDGYLKRTSQRSFAASNGQDFGMKDTDRMLHQFEMNTTDVLLLFTNKGSYIYCPVHQLPDIRWKDMGQHFSNLITIDRDETIVKAIPIKEFDPSAYLLFFTKNGMVKKTELTHYKAQRYSKALVALNLKGEDELIDVHVTNGESQIFMATHLGYGLWFGEDEVNVVGARAAGVKGINLKEDDFVVSGEILQQSDSIVLFTQRGAVKRMSLSEFEKTSRAKRGVVMLRELKKNPHRVVALFACGLEQRLMAETEKGDRKELQTKELRTNDRYSNGSFFFDEEESGKVTAVWRLHTEQ.

The Topo IIA-type catalytic domain occupies 33-499; the sequence is LPDARDGLKP…EEIKINLEVM (467 aa). The O-(5'-phospho-DNA)-tyrosine intermediate role is filled by tyrosine 121.

This sequence belongs to the type II topoisomerase GyrA/ParC subunit family. ParC type 2 subfamily. Heterotetramer composed of ParC and ParE.

It localises to the cell membrane. The protein resides in the cytoplasm. The enzyme catalyses ATP-dependent breakage, passage and rejoining of double-stranded DNA.. Topoisomerase IV is essential for chromosome segregation. It relaxes supercoiled DNA. Performs the decatenation events required during the replication of a circular DNA molecule. This is DNA topoisomerase 4 subunit A from Bacillus subtilis (strain 168).